The chain runs to 339 residues: Holliday junction branch migration complex subunit RuvB (339 aa).

Residues 1–187 (MQGFEDENRI…FGVICKLDYY (187 aa)) form a large ATPase domain (RuvB-L) region. ATP is bound by residues Leu26, Arg27, Gly68, Lys71, Thr72, Thr73, 134 to 136 (EDF), Arg177, Tyr187, and Arg224. Thr72 serves as a coordination point for Mg(2+). Positions 188–258 (TVDELSKIVL…VAKDALELLG (71 aa)) are small ATPAse domain (RuvB-S). Residues 261-339 (SLGLDFVDEK…HLKIPYPNEK (79 aa)) form a head domain (RuvB-H) region. The DNA site is built by Arg297, Arg316, and Arg321.

Belongs to the RuvB family. In terms of assembly, homohexamer. Forms an RuvA(8)-RuvB(12)-Holliday junction (HJ) complex. HJ DNA is sandwiched between 2 RuvA tetramers; dsDNA enters through RuvA and exits via RuvB. An RuvB hexamer assembles on each DNA strand where it exits the tetramer. Each RuvB hexamer is contacted by two RuvA subunits (via domain III) on 2 adjacent RuvB subunits; this complex drives branch migration. In the full resolvosome a probable DNA-RuvA(4)-RuvB(12)-RuvC(2) complex forms which resolves the HJ.

It localises to the cytoplasm. The catalysed reaction is ATP + H2O = ADP + phosphate + H(+). Functionally, the RuvA-RuvB-RuvC complex processes Holliday junction (HJ) DNA during genetic recombination and DNA repair, while the RuvA-RuvB complex plays an important role in the rescue of blocked DNA replication forks via replication fork reversal (RFR). RuvA specifically binds to HJ cruciform DNA, conferring on it an open structure. The RuvB hexamer acts as an ATP-dependent pump, pulling dsDNA into and through the RuvAB complex. RuvB forms 2 homohexamers on either side of HJ DNA bound by 1 or 2 RuvA tetramers; 4 subunits per hexamer contact DNA at a time. Coordinated motions by a converter formed by DNA-disengaged RuvB subunits stimulates ATP hydrolysis and nucleotide exchange. Immobilization of the converter enables RuvB to convert the ATP-contained energy into a lever motion, pulling 2 nucleotides of DNA out of the RuvA tetramer per ATP hydrolyzed, thus driving DNA branch migration. The RuvB motors rotate together with the DNA substrate, which together with the progressing nucleotide cycle form the mechanistic basis for DNA recombination by continuous HJ branch migration. Branch migration allows RuvC to scan DNA until it finds its consensus sequence, where it cleaves and resolves cruciform DNA. The protein is Holliday junction branch migration complex subunit RuvB of Clostridioides difficile (strain 630) (Peptoclostridium difficile).